Here is a 430-residue protein sequence, read N- to C-terminus: tRNA(Ile)-lysidine synthase (430 aa).

Position 21–26 (21–26) interacts with ATP; the sequence is SGGLDS.

The protein belongs to the tRNA(Ile)-lysidine synthase family.

The protein resides in the cytoplasm. It catalyses the reaction cytidine(34) in tRNA(Ile2) + L-lysine + ATP = lysidine(34) in tRNA(Ile2) + AMP + diphosphate + H(+). Functionally, ligates lysine onto the cytidine present at position 34 of the AUA codon-specific tRNA(Ile) that contains the anticodon CAU, in an ATP-dependent manner. Cytidine is converted to lysidine, thus changing the amino acid specificity of the tRNA from methionine to isoleucine. This is tRNA(Ile)-lysidine synthase from Salmonella newport (strain SL254).